Reading from the N-terminus, the 347-residue chain is Ferredoxin--NADP reductase 1 (347 aa).

Positions 26, 45, 53, 58, 98, 133, 298, and 339 each coordinate FAD.

It belongs to the ferredoxin--NADP reductase type 2 family. Homodimer. FAD is required as a cofactor.

The catalysed reaction is 2 reduced [2Fe-2S]-[ferredoxin] + NADP(+) + H(+) = 2 oxidized [2Fe-2S]-[ferredoxin] + NADPH. This is Ferredoxin--NADP reductase 1 from Chloroherpeton thalassium (strain ATCC 35110 / GB-78).